The sequence spans 226 residues: Chalcone--flavanone isomerase 3 (226 aa).

The substrate site is built by T49, N114, and S191.

It belongs to the chalcone isomerase family.

The enzyme catalyses a chalcone = a flavanone.. It functions in the pathway secondary metabolite biosynthesis; flavonoid biosynthesis. Functionally, catalyzes the intramolecular cyclization of bicyclic chalcones into tricyclic (S)-flavanones. Responsible for the isomerization of 4,2',4',6'-tetrahydroxychalcone (also termed chalcone) into naringenin. In Glycine max (Soybean), this protein is Chalcone--flavanone isomerase 3 (CHI3).